A 413-amino-acid polypeptide reads, in one-letter code: Eukaryotic initiation factor 4A-10 (413 aa).

A Q motif motif is present at residues Asp-40–Gln-68. Residues Ile-71–Ile-241 enclose the Helicase ATP-binding domain. Residue Ala-84–Thr-91 participates in ATP binding. The DEAD box motif lies at Asp-189 to Asp-192. Residues Gly-252–Leu-413 enclose the Helicase C-terminal domain.

Belongs to the DEAD box helicase family. eIF4A subfamily. As to quaternary structure, eIF4F is a multi-subunit complex, the composition of which varies with external and internal environmental conditions. It is composed of at least EIF4A, EIF4E and EIF4G.

It carries out the reaction ATP + H2O = ADP + phosphate + H(+). In terms of biological role, ATP-dependent RNA helicase which is a subunit of the eIF4F complex involved in cap recognition and is required for mRNA binding to ribosome. In the current model of translation initiation, eIF4A unwinds RNA secondary structures in the 5'-UTR of mRNAs which is necessary to allow efficient binding of the small ribosomal subunit, and subsequent scanning for the initiator codon. The polypeptide is Eukaryotic initiation factor 4A-10 (Nicotiana tabacum (Common tobacco)).